Consider the following 394-residue polypeptide: Elongation factor Tu (394 aa).

Positions 10-204 (KPHVNIGTIG…AVDSWIPLPE (195 aa)) constitute a tr-type G domain. Residues 19–26 (GHVDHGKT) form a G1 region. 19-26 (GHVDHGKT) provides a ligand contact to GTP. Residue T26 coordinates Mg(2+). Residues 60-64 (GITIN) are G2. The segment at 81 to 84 (DCPG) is G3. GTP-binding positions include 81 to 85 (DCPGH) and 136 to 139 (NKCD). The G4 stretch occupies residues 136–139 (NKCD). The G5 stretch occupies residues 174–176 (SGL).

Belongs to the TRAFAC class translation factor GTPase superfamily. Classic translation factor GTPase family. EF-Tu/EF-1A subfamily. Monomer.

It is found in the cytoplasm. The enzyme catalyses GTP + H2O = GDP + phosphate + H(+). Its function is as follows. GTP hydrolase that promotes the GTP-dependent binding of aminoacyl-tRNA to the A-site of ribosomes during protein biosynthesis. The polypeptide is Elongation factor Tu (Ureaplasma parvum serovar 3 (strain ATCC 27815 / 27 / NCTC 11736)).